The chain runs to 705 residues: Elongation factor G (705 aa).

The 277-residue stretch at asparagine 6–leucine 282 folds into the tr-type G domain. GTP contacts are provided by residues alanine 15–threonine 22, aspartate 79–histidine 83, and asparagine 133–aspartate 136.

It belongs to the TRAFAC class translation factor GTPase superfamily. Classic translation factor GTPase family. EF-G/EF-2 subfamily.

It is found in the cytoplasm. Its function is as follows. Catalyzes the GTP-dependent ribosomal translocation step during translation elongation. During this step, the ribosome changes from the pre-translocational (PRE) to the post-translocational (POST) state as the newly formed A-site-bound peptidyl-tRNA and P-site-bound deacylated tRNA move to the P and E sites, respectively. Catalyzes the coordinated movement of the two tRNA molecules, the mRNA and conformational changes in the ribosome. The sequence is that of Elongation factor G from Corynebacterium glutamicum (strain ATCC 13032 / DSM 20300 / JCM 1318 / BCRC 11384 / CCUG 27702 / LMG 3730 / NBRC 12168 / NCIMB 10025 / NRRL B-2784 / 534).